The following is a 406-amino-acid chain: Probable G-protein coupled receptor tkr-1 (406 aa).

The Extracellular portion of the chain corresponds to 1-47 (MNQEFLIQLGERACKNAENLTLPAELEGIFFCAPSSRESLATQVFVA). Residues 48-68 (IAFVLLMATAIIGNSVVMWII) traverse the membrane as a helical segment. Over 69 to 76 (YQHKVMHY) the chain is Cytoplasmic. A helical membrane pass occupies residues 77 to 97 (GFNYFLFNMAFADLLIALFNV). Topologically, residues 98-115 (GTSWTYNLYYDWWYGDLC) are extracellular. Residues 116–136 (TLTSFFGIAPTTVSVCSMMAL) form a helical membrane-spanning segment. At 137 to 158 (SWDRCQAVVNPLQKRPLSRKRS) the chain is on the cytoplasmic side. A helical transmembrane segment spans residues 159-179 (VIAILIIWVVSTVTALPFAIA). Over 180-204 (ASVNSLYTYDVVTSTVSKAHVCSAP) the chain is Extracellular. Residues 205-225 (VNTFFEKVLFGIQYALPIIIL) form a helical membrane-spanning segment. Over 226–261 (GSTFTRIAVAFRATNEATDSSLKNNHTRAKSKAVKM) the chain is Cytoplasmic. Residues 262 to 282 (LFLMVVAFVVCWLPYHIYHAF) form a helical membrane-spanning segment. The Extracellular portion of the chain corresponds to 283-297 (ALEEFFDAARGKYAY). The helical transmembrane segment at 298–318 (LLIYWIAMSSCAYNPIIYCFA) threads the bilayer. Residues 319–406 (NERFRIGFRY…KVHLLSCHER (88 aa)) lie on the Cytoplasmic side of the membrane.

This sequence belongs to the G-protein coupled receptor 1 family.

It is found in the cell membrane. Not known. Putative receptor. This is Probable G-protein coupled receptor tkr-1 (tkr-1) from Caenorhabditis elegans.